The sequence spans 317 residues: Gamma-glutamyl hydrolase (317 aa).

Positions 1 to 24 (MASLGRLLCAWVLLLCGLASPGLS) are cleaved as a signal peptide. The Gamma-glutamyl hydrolase domain maps to 25 to 317 (GSYERGSKRP…SSFQQAYMFN (293 aa)). 2 N-linked (GlcNAc...) asparagine glycosylation sites follow: N46 and N100. The Nucleophile role is filled by C133. N153, N162, N188, and N202 each carry an N-linked (GlcNAc...) asparagine glycan. Residue H243 is the Proton donor of the active site. An N-linked (GlcNAc...) asparagine glycan is attached at N306.

Belongs to the peptidase C26 family. As to quaternary structure, homodimer.

Its subcellular location is the secreted. The protein localises to the extracellular space. It localises to the lysosome. It is found in the melanosome. The catalysed reaction is (6S)-5,6,7,8-tetrahydrofolyl-(gamma-L-Glu)(n) + (n-1) H2O = (6S)-5,6,7,8-tetrahydrofolate + (n-1) L-glutamate. Its activity is regulated as follows. Activity is altered by insulin and estrogen. Hydrolyzes the polyglutamate sidechains of pteroylpolyglutamates. Progressively removes gamma-glutamyl residues from pteroylpoly-gamma-glutamate to yield pteroyl-alpha-glutamate (folic acid) and free glutamate. May play an important role in the bioavailability of dietary pteroylpolyglutamates and in the metabolism of pteroylpolyglutamates and antifolates. Exhibits either endo- or exopeptidase activity depending upon the tissue of origin. When secreted, it acts primarily as an endopeptidase. The protein is Gamma-glutamyl hydrolase (Ggh) of Rattus norvegicus (Rat).